The sequence spans 536 residues: Phosphoenolpyruvate carboxykinase (ATP) (536 aa).

Residues Arg-61, Tyr-195, and Lys-201 each contribute to the substrate site. ATP is bound by residues Lys-201, His-220, and 236–244 (GLSGTGKTT). The Mn(2+) site is built by Lys-201 and His-220. Asp-257 lines the Mn(2+) pocket. Residues Glu-285, Arg-322, and Thr-447 each coordinate ATP. A substrate-binding site is contributed by Arg-322.

Belongs to the phosphoenolpyruvate carboxykinase (ATP) family. Mn(2+) serves as cofactor.

Its subcellular location is the cytoplasm. The catalysed reaction is oxaloacetate + ATP = phosphoenolpyruvate + ADP + CO2. It participates in carbohydrate biosynthesis; gluconeogenesis. Functionally, involved in the gluconeogenesis. Catalyzes the conversion of oxaloacetate (OAA) to phosphoenolpyruvate (PEP) through direct phosphoryl transfer between the nucleoside triphosphate and OAA. In Allorhizobium ampelinum (strain ATCC BAA-846 / DSM 112012 / S4) (Agrobacterium vitis (strain S4)), this protein is Phosphoenolpyruvate carboxykinase (ATP).